A 1012-amino-acid polypeptide reads, in one-letter code: Structural polyprotein (1012 aa).

Aspartate 30 is an a divalent metal cation binding site. One can recognise a Peptidase S50 domain in the interval 513–755; it reads ADKGYEVVAN…AGRQYHLAMA (243 aa). Serine 652 (nucleophile) is an active-site residue. Residue lysine 692 is part of the active site. Residues 970–1012 are disordered; the sequence is MEMKHRNPRRAPPKPKPKPNAPSQRPPGRLGRWIRTVSDEDLE. Basic residues predominate over residues 975–986; it reads RNPRRAPPKPKP. The tract at residues 1003-1012 is interaction with VP1 protein; it reads IRTVSDEDLE.

In terms of assembly, homotrimer. A central divalent metal stabilizes the VP2 trimer. Interacts with host ITGA4/ITGB1. As to quaternary structure, homodimer. Interacts (via C-terminus) with VP1 in the cytoplasm. Interacts with VP2. Post-translationally, specific enzymatic cleavages yield mature proteins. The capsid assembly seems to be regulated by polyprotein processing. The protease VP4 cleaves itself off the polyprotein, thus releasing pre-VP2 and VP3 within the infected cell. During capsid assembly, the C-terminus of pre-VP2 is further processed by VP4, giving rise to VP2, the external capsid protein and three small peptides that all stay closely associated with the capsid.

It localises to the virion. Its subcellular location is the host cytoplasm. Capsid protein VP2 self assembles to form an icosahedral capsid with a T=13 symmetry, about 70 nm in diameter, and consisting of 260 VP2 trimers. The capsid encapsulates the genomic dsRNA. VP2 is also involved in attachment and entry into the host cell by interacting with host ITGA4/ITGB1. In terms of biological role, the precursor of VP2 plays an important role in capsid assembly. First, pre-VP2 and VP2 oligomers assemble to form a procapsid. Then, the pre-VP2 intermediates may be processed into VP2 proteins by proteolytic cleavage mediated by VP4 to obtain the mature virion. The final capsid is composed of pentamers and hexamers but VP2 has a natural tendency to assemble into all-pentameric structures. Therefore pre-VP2 may be required to allow formation of the hexameric structures. Its function is as follows. Protease VP4 is a serine protease that cleaves the polyprotein into its final products. Pre-VP2 is first partially cleaved, and may be completely processed by VP4 upon capsid maturation. Functionally, capsid protein VP3 plays a key role in virion assembly by providing a scaffold for the capsid made of VP2. May self-assemble to form a T=4-like icosahedral inner-capsid composed of at least 180 trimers. Plays a role in genomic RNA packaging by recruiting VP1 into the capsid and interacting with the dsRNA genome segments to form a ribonucleoprotein complex. Additionally, the interaction of the VP3 C-terminal tail with VP1 removes the inherent structural blockade of the polymerase active site. Thus, VP3 can also function as a transcriptional activator. Structural peptide 1 is a small peptide derived from pre-VP2 C-terminus. It destabilizes and perforates cell membranes, suggesting a role during entry. In terms of biological role, structural peptide 2 is a small peptide derived from pVP2 C-terminus. It is not essential for the virus viability, but viral growth is affected when missing. Its function is as follows. Structural peptide 3 is a small peptide derived from pVP2 C-terminus. It is not essential for the virus viability, but viral growth is affected when missing. Functionally, structural peptide 4 is a small peptide derived from pVP2 C-terminus. It is essential for the virus viability. The sequence is that of Structural polyprotein from Avian infectious bursal disease virus (strain Australian 002-73) (IBDV).